A 371-amino-acid chain; its full sequence is o-succinylbenzoate synthase (371 aa).

Lys-164 acts as the Proton donor in catalysis. Residues Asp-189, Glu-214, and Asp-239 each coordinate Mg(2+). Catalysis depends on Lys-263, which acts as the Proton acceptor.

The protein belongs to the mandelate racemase/muconate lactonizing enzyme family. MenC type 2 subfamily. Requires a divalent metal cation as cofactor.

The catalysed reaction is (1R,6R)-6-hydroxy-2-succinyl-cyclohexa-2,4-diene-1-carboxylate = 2-succinylbenzoate + H2O. It participates in quinol/quinone metabolism; 1,4-dihydroxy-2-naphthoate biosynthesis; 1,4-dihydroxy-2-naphthoate from chorismate: step 4/7. It functions in the pathway quinol/quinone metabolism; menaquinone biosynthesis. In terms of biological role, converts 2-succinyl-6-hydroxy-2,4-cyclohexadiene-1-carboxylate (SHCHC) to 2-succinylbenzoate (OSB). Does not show detectable N-acylamino acid racemase (NAAAR) activity with N-acetyl-S-methionine as substrate. The protein is o-succinylbenzoate synthase of Bacillus subtilis (strain 168).